A 146-amino-acid polypeptide reads, in one-letter code: Large ribosomal subunit protein uL23m (146 aa).

The segment at 108–146 (PDLFPEKEPTSPDPLEEELPQQRQSSDPRCPGIPSWFGL) is disordered.

This sequence belongs to the universal ribosomal protein uL23 family. In terms of assembly, component of the mitochondrial ribosome large subunit (39S) which comprises a 16S rRNA and about 50 distinct proteins.

Its subcellular location is the mitochondrion. The polypeptide is Large ribosomal subunit protein uL23m (Mrpl23) (Rattus norvegicus (Rat)).